The chain runs to 48 residues: ATP synthase protein 8 (48 aa).

M1 is subject to N-formylmethionine. The Mitochondrial intermembrane portion of the chain corresponds to M1–Q12. Residues I13–L32 form a helical membrane-spanning segment. Topologically, residues P33–T48 are mitochondrial matrix.

F-type ATP synthases have 2 components, the catalytic core F(1) and the membrane-embedded component F(0), linked together by a central stalk and a peripheral stalk. The central stalk, also called rotor shaft, is often seen as part of F(1). The peripheral stalk is seen as part of F(0). F(0) contains the membrane channel next to the rotor. F-type ATP synthases form dimers but each monomer functions independently in ATP generation. The dimer consists of 17 different polypeptides: ATP1 (subunit alpha, 3 molecules per monomer, part of F(1)), ATP2 (subunit beta, 3 copies per monomer, part of F(1)), ATP3 (subunit gamma, part of the central stalk), ATP4 (subunit b, part of the peripheral stalk), ATP5/OSCP (subunit 5/OSCP, part of the peripheral stalk), ATP6 (subunit a, part of the peripheral stalk), ATP7 (subunit d, part of the peripheral stalk), ATP8 (subunit 8, part of the peripheral stalk), OLI1 (subunit c, part of the rotor, 10 molecules per monomer), ATP14 (subunit h, part of the peripheral stalk), ATP15 (subunit epsilon, part of the central stalk), ATP16 (subunit delta, part of the central stalk), ATP17 (subunit f, part of the peripheral stalk), ATP18 (subunit i/j, part of the peripheral stalk), ATP19 (subunit k, dimer-specific, at interface between monomers), ATP20 (subunit g, at interface between monomers), TIM11 (subunit e, at interface between monomers).

Its subcellular location is the mitochondrion inner membrane. In terms of biological role, mitochondrial membrane ATP synthase (F(1)F(0) ATP synthase or Complex V) produces ATP from ADP in the presence of a proton gradient across the membrane which is generated by electron transport complexes of the respiratory chain. F-type ATP synthases consist of two structural domains, F(1) - containing the extramembraneous catalytic core, and F(0) - containing the membrane proton channel, linked together by a central stalk and a peripheral stalk. During catalysis, ATP synthesis in the catalytic domain of F(1) is coupled via a rotary mechanism of the central stalk subunits to proton translocation. Part of the complex F(0) domain. Minor subunit located with subunit a/ATP6 in the membrane. This chain is ATP synthase protein 8, found in Yarrowia lipolytica (strain CLIB 122 / E 150) (Yeast).